Consider the following 286-residue polypeptide: Energy-coupling factor transporter ATP-binding protein EcfA2 (286 aa).

In terms of domain architecture, ABC transporter spans 3 to 244 (IKVENVSFIY…AERLEKIGLS (242 aa)). 40–47 (GHTGSGKS) is an ATP binding site.

The protein belongs to the ABC transporter superfamily. Energy-coupling factor EcfA family. As to quaternary structure, forms a stable energy-coupling factor (ECF) transporter complex composed of 2 membrane-embedded substrate-binding proteins (S component), 2 ATP-binding proteins (A component) and 2 transmembrane proteins (T component).

It localises to the cell membrane. Its function is as follows. ATP-binding (A) component of a common energy-coupling factor (ECF) ABC-transporter complex. Unlike classic ABC transporters this ECF transporter provides the energy necessary to transport a number of different substrates. This chain is Energy-coupling factor transporter ATP-binding protein EcfA2, found in Caldanaerobacter subterraneus subsp. tengcongensis (strain DSM 15242 / JCM 11007 / NBRC 100824 / MB4) (Thermoanaerobacter tengcongensis).